The chain runs to 146 residues: Tol-Pal system protein TolR (146 aa).

The helical transmembrane segment at 16–36 (VVPYIDVMLVLLVIFMVTAPM) threads the bilayer.

The protein belongs to the ExbD/TolR family. As to quaternary structure, the Tol-Pal system is composed of five core proteins: the inner membrane proteins TolA, TolQ and TolR, the periplasmic protein TolB and the outer membrane protein Pal. They form a network linking the inner and outer membranes and the peptidoglycan layer.

The protein localises to the cell inner membrane. Functionally, part of the Tol-Pal system, which plays a role in outer membrane invagination during cell division and is important for maintaining outer membrane integrity. The sequence is that of Tol-Pal system protein TolR from Pseudomonas aeruginosa (strain ATCC 15692 / DSM 22644 / CIP 104116 / JCM 14847 / LMG 12228 / 1C / PRS 101 / PAO1).